Reading from the N-terminus, the 312-residue chain is DNA-directed RNA polymerase subunit alpha (312 aa).

The alpha N-terminal domain (alpha-NTD) stretch occupies residues 1–229 (MLQYQIDRVD…ALFQPLATVT (229 aa)). An alpha C-terminal domain (alpha-CTD) region spans residues 241–312 (SAESQIPLEE…ISLPQSRTTA (72 aa)).

This sequence belongs to the RNA polymerase alpha chain family. As to quaternary structure, in cyanobacteria the RNAP catalytic core is composed of 2 alpha, 1 beta, 1 beta', 1 gamma and 1 omega subunit. When a sigma factor is associated with the core the holoenzyme is formed, which can initiate transcription.

It catalyses the reaction RNA(n) + a ribonucleoside 5'-triphosphate = RNA(n+1) + diphosphate. Its function is as follows. DNA-dependent RNA polymerase catalyzes the transcription of DNA into RNA using the four ribonucleoside triphosphates as substrates. The sequence is that of DNA-directed RNA polymerase subunit alpha from Synechococcus sp. (strain RCC307).